We begin with the raw amino-acid sequence, 493 residues long: Ketol-acid reductoisomerase (NADP(+)) (493 aa).

Residues 15-208 (AQLGKCRFMQ…GGDRAGVLES (194 aa)) form the KARI N-terminal Rossmann domain. NADP(+)-binding positions include 45 to 48 (CGAQ), Arg68, Arg76, Ser78, and 108 to 110 (DKQ). His132 is a catalytic residue. Gly158 serves as a coordination point for NADP(+). 2 KARI C-terminal knotted domains span residues 209 to 344 (SFVA…NAPA) and 345 to 486 (FAGK…MKDM). Mg(2+)-binding residues include Asp217, Glu221, Glu389, and Glu393. Ser414 provides a ligand contact to substrate.

The protein belongs to the ketol-acid reductoisomerase family. Requires Mg(2+) as cofactor.

It catalyses the reaction (2R)-2,3-dihydroxy-3-methylbutanoate + NADP(+) = (2S)-2-acetolactate + NADPH + H(+). It carries out the reaction (2R,3R)-2,3-dihydroxy-3-methylpentanoate + NADP(+) = (S)-2-ethyl-2-hydroxy-3-oxobutanoate + NADPH + H(+). The protein operates within amino-acid biosynthesis; L-isoleucine biosynthesis; L-isoleucine from 2-oxobutanoate: step 2/4. It functions in the pathway amino-acid biosynthesis; L-valine biosynthesis; L-valine from pyruvate: step 2/4. Involved in the biosynthesis of branched-chain amino acids (BCAA). Catalyzes an alkyl-migration followed by a ketol-acid reduction of (S)-2-acetolactate (S2AL) to yield (R)-2,3-dihydroxy-isovalerate. In the isomerase reaction, S2AL is rearranged via a Mg-dependent methyl migration to produce 3-hydroxy-3-methyl-2-ketobutyrate (HMKB). In the reductase reaction, this 2-ketoacid undergoes a metal-dependent reduction by NADPH to yield (R)-2,3-dihydroxy-isovalerate. The chain is Ketol-acid reductoisomerase (NADP(+)) from Aeromonas hydrophila subsp. hydrophila (strain ATCC 7966 / DSM 30187 / BCRC 13018 / CCUG 14551 / JCM 1027 / KCTC 2358 / NCIMB 9240 / NCTC 8049).